A 461-amino-acid chain; its full sequence is Dihydrolipoyl dehydrogenase (461 aa).

Residues 33 to 41 (EAAEVGGVC), K50, and A112 each bind FAD. C41 and C46 are oxidised to a cystine. Residues 173–177 (GGGAV), E196, and 263–266 (AVGR) contribute to the NAD(+) site. D306 and A314 together coordinate FAD. H437 serves as the catalytic Proton acceptor.

Belongs to the class-I pyridine nucleotide-disulfide oxidoreductase family. In terms of assembly, homodimer. Requires FAD as cofactor.

It is found in the membrane. The enzyme catalyses N(6)-[(R)-dihydrolipoyl]-L-lysyl-[protein] + NAD(+) = N(6)-[(R)-lipoyl]-L-lysyl-[protein] + NADH + H(+). Functionally, has chromate reductase activity. This is Dihydrolipoyl dehydrogenase from Thermus scotoductus (strain ATCC 700910 / SA-01).